The primary structure comprises 277 residues: Ubiquinone biosynthesis protein COQ4, mitochondrial (277 aa).

A mitochondrion-targeting transit peptide spans 1 to 14 (MLTKRALRTTDPYR). Residues His157, Asp158, His161, and Glu173 each coordinate Zn(2+).

The protein belongs to the COQ4 family. In terms of assembly, component of a multi-subunit COQ enzyme complex, composed of at least COQ3, COQ4, COQ5, COQ6, COQ7 and COQ9. The cofactor is Zn(2+).

The protein resides in the mitochondrion inner membrane. The catalysed reaction is a 4-hydroxy-3-methoxy-5-(all-trans-polyprenyl)benzoate + H(+) = a 2-methoxy-6-(all-trans-polyprenyl)phenol + CO2. The protein operates within cofactor biosynthesis; ubiquinone biosynthesis. In terms of biological role, lyase that catalyzes the C1-decarboxylation of 4-hydroxy-3-methoxy-5-(all-trans-polyprenyl)benzoic acid into 2-methoxy-6-(all-trans-polyprenyl)phenol during ubiquinone biosynthesis. This is Ubiquinone biosynthesis protein COQ4, mitochondrial from Ajellomyces capsulatus (strain G186AR / H82 / ATCC MYA-2454 / RMSCC 2432) (Darling's disease fungus).